Reading from the N-terminus, the 251-residue chain is tRNA-cytidine(32) 2-sulfurtransferase 2 (251 aa).

The short motif at 33 to 38 (SGGKDS) is the PP-loop motif element. Residues Cys-108, Cys-111, and Cys-199 each contribute to the [4Fe-4S] cluster site.

Belongs to the TtcA family. In terms of assembly, homodimer. Requires Mg(2+) as cofactor. [4Fe-4S] cluster is required as a cofactor.

The protein localises to the cytoplasm. It catalyses the reaction cytidine(32) in tRNA + S-sulfanyl-L-cysteinyl-[cysteine desulfurase] + AH2 + ATP = 2-thiocytidine(32) in tRNA + L-cysteinyl-[cysteine desulfurase] + A + AMP + diphosphate + H(+). Its pathway is tRNA modification. Catalyzes the ATP-dependent 2-thiolation of cytidine in position 32 of tRNA, to form 2-thiocytidine (s(2)C32). The sulfur atoms are provided by the cysteine/cysteine desulfurase (IscS) system. The sequence is that of tRNA-cytidine(32) 2-sulfurtransferase 2 from Francisella tularensis subsp. tularensis (strain WY96-3418).